We begin with the raw amino-acid sequence, 535 residues long: CTP synthase (535 aa).

An amidoligase domain region spans residues 1–267 (MTKYIFVTGG…DSLVCSHLKL (267 aa)). S13 contacts CTP. S13 serves as a coordination point for UTP. Position 14-19 (14-19 (SLGKGI)) interacts with ATP. Y54 contacts L-glutamine. D71 serves as a coordination point for ATP. Positions 71 and 141 each coordinate Mg(2+). CTP-binding positions include 148–150 (DIE), 188–193 (KTKPTQ), and K224. Residues 188–193 (KTKPTQ) and K224 each bind UTP. A Glutamine amidotransferase type-1 domain is found at 292 to 534 (TIALVGKYVE…VHASLKTSEK (243 aa)). Position 354 (G354) interacts with L-glutamine. C381 acts as the Nucleophile; for glutamine hydrolysis in catalysis. Residues 382 to 385 (LGMQ), E405, and R462 contribute to the L-glutamine site. Catalysis depends on residues H507 and E509.

The protein belongs to the CTP synthase family. In terms of assembly, homotetramer.

It carries out the reaction UTP + L-glutamine + ATP + H2O = CTP + L-glutamate + ADP + phosphate + 2 H(+). It catalyses the reaction L-glutamine + H2O = L-glutamate + NH4(+). The catalysed reaction is UTP + NH4(+) + ATP = CTP + ADP + phosphate + 2 H(+). The protein operates within pyrimidine metabolism; CTP biosynthesis via de novo pathway; CTP from UDP: step 2/2. With respect to regulation, allosterically activated by GTP, when glutamine is the substrate; GTP has no effect on the reaction when ammonia is the substrate. The allosteric effector GTP functions by stabilizing the protein conformation that binds the tetrahedral intermediate(s) formed during glutamine hydrolysis. Inhibited by the product CTP, via allosteric rather than competitive inhibition. In terms of biological role, catalyzes the ATP-dependent amination of UTP to CTP with either L-glutamine or ammonia as the source of nitrogen. Regulates intracellular CTP levels through interactions with the four ribonucleotide triphosphates. The chain is CTP synthase from Bacillus licheniformis (strain ATCC 14580 / DSM 13 / JCM 2505 / CCUG 7422 / NBRC 12200 / NCIMB 9375 / NCTC 10341 / NRRL NRS-1264 / Gibson 46).